The chain runs to 429 residues: Glutamate-1-semialdehyde 2,1-aminomutase 1 (429 aa).

An N6-(pyridoxal phosphate)lysine modification is found at K267.

The protein belongs to the class-III pyridoxal-phosphate-dependent aminotransferase family. HemL subfamily. As to quaternary structure, homodimer. It depends on pyridoxal 5'-phosphate as a cofactor.

The protein localises to the cytoplasm. The catalysed reaction is (S)-4-amino-5-oxopentanoate = 5-aminolevulinate. It functions in the pathway porphyrin-containing compound metabolism; protoporphyrin-IX biosynthesis; 5-aminolevulinate from L-glutamyl-tRNA(Glu): step 2/2. The chain is Glutamate-1-semialdehyde 2,1-aminomutase 1 from Staphylococcus carnosus (strain TM300).